Reading from the N-terminus, the 184-residue chain is ATP synthase subunit b, chloroplastic (184 aa).

A helical membrane pass occupies residues 27 to 49; the sequence is LATNPINLSVVLGVLIFFGKGVL.

This sequence belongs to the ATPase B chain family. In terms of assembly, F-type ATPases have 2 components, F(1) - the catalytic core - and F(0) - the membrane proton channel. F(1) has five subunits: alpha(3), beta(3), gamma(1), delta(1), epsilon(1). F(0) has four main subunits: a(1), b(1), b'(1) and c(10-14). The alpha and beta chains form an alternating ring which encloses part of the gamma chain. F(1) is attached to F(0) by a central stalk formed by the gamma and epsilon chains, while a peripheral stalk is formed by the delta, b and b' chains.

The protein localises to the plastid. The protein resides in the chloroplast thylakoid membrane. In terms of biological role, f(1)F(0) ATP synthase produces ATP from ADP in the presence of a proton or sodium gradient. F-type ATPases consist of two structural domains, F(1) containing the extramembraneous catalytic core and F(0) containing the membrane proton channel, linked together by a central stalk and a peripheral stalk. During catalysis, ATP synthesis in the catalytic domain of F(1) is coupled via a rotary mechanism of the central stalk subunits to proton translocation. Component of the F(0) channel, it forms part of the peripheral stalk, linking F(1) to F(0). The chain is ATP synthase subunit b, chloroplastic from Chloranthus spicatus (Chulantree).